Reading from the N-terminus, the 255-residue chain is Proteasome subunit alpha type-3 (255 aa).

Ser2 carries the N-acetylserine modification. 3 positions are modified to N6-acetyllysine: Lys57, Lys206, and Lys230. A phosphoserine mark is found at Ser243 and Ser250.

It belongs to the peptidase T1A family. As to quaternary structure, the 26S proteasome consists of a 20S proteasome core and two 19S regulatory subunits. The 20S proteasome core is a barrel-shaped complex made of 28 subunits that are arranged in four stacked rings. The two outer rings are each formed by seven alpha subunits, and the two inner rings are formed by seven beta subunits. The proteolytic activity is exerted by three beta-subunits PSMB5, PSMB6 and PSMB7. Interacts with AURKB. Interacts with CDKN1A. Interacts with MDM2 and RB1. Interacts with the C-terminus of TBXA2R isoform 2. Interacts with DNAJB2. In terms of tissue distribution, detected in liver (at protein level).

It localises to the cytoplasm. Its subcellular location is the nucleus. Component of the 20S core proteasome complex involved in the proteolytic degradation of most intracellular proteins. This complex plays numerous essential roles within the cell by associating with different regulatory particles. Associated with two 19S regulatory particles, forms the 26S proteasome and thus participates in the ATP-dependent degradation of ubiquitinated proteins. The 26S proteasome plays a key role in the maintenance of protein homeostasis by removing misfolded or damaged proteins that could impair cellular functions, and by removing proteins whose functions are no longer required. Associated with the PA200 or PA28, the 20S proteasome mediates ubiquitin-independent protein degradation. This type of proteolysis is required in several pathways including spermatogenesis (20S-PA200 complex) or generation of a subset of MHC class I-presented antigenic peptides (20S-PA28 complex). Binds to the C-terminus of CDKN1A and thereby mediates its degradation. Negatively regulates the membrane trafficking of the cell-surface thromboxane A2 receptor (TBXA2R) isoform 2. The chain is Proteasome subunit alpha type-3 (Psma3) from Mus musculus (Mouse).